A 230-amino-acid polypeptide reads, in one-letter code: Uracil-DNA glycosylase (230 aa).

D70 functions as the Proton acceptor in the catalytic mechanism.

Belongs to the uracil-DNA glycosylase (UDG) superfamily. UNG family.

Its subcellular location is the cytoplasm. The catalysed reaction is Hydrolyzes single-stranded DNA or mismatched double-stranded DNA and polynucleotides, releasing free uracil.. Its function is as follows. Excises uracil residues from the DNA which can arise as a result of misincorporation of dUMP residues by DNA polymerase or due to deamination of cytosine. This chain is Uracil-DNA glycosylase, found in Pseudomonas putida (strain ATCC 700007 / DSM 6899 / JCM 31910 / BCRC 17059 / LMG 24140 / F1).